A 215-amino-acid chain; its full sequence is Thymidylate kinase (215 aa).

10-17 provides a ligand contact to ATP; the sequence is GGEGVGKT.

Belongs to the thymidylate kinase family.

It catalyses the reaction dTMP + ATP = dTDP + ADP. In terms of biological role, phosphorylation of dTMP to form dTDP in both de novo and salvage pathways of dTTP synthesis. The chain is Thymidylate kinase from Bartonella henselae (strain ATCC 49882 / DSM 28221 / CCUG 30454 / Houston 1) (Rochalimaea henselae).